Reading from the N-terminus, the 624-residue chain is MAKKKLNSTIKRSRTRSGCVTCRDRHIKCDEQQPVCKNCQKSNRKCYRGIRLNFTQYTFYNPDDNKPKELQQNEQPNSSHYAFPNLEPNPVSQKHRILDQSITIASLYDDLKKYKPYIHLHTPEDLRESDLQFQEDTYNSYISTSAINLRGKKLTKRDPGLSTSLSVINPTLESEIKPNPVILNQLSFHPPPNLNTGVLYPPTATAATTTTSSPTNHHLHPYFVSSIPNPQHHPMLDTSQHQETTSTDPNQFDYSHLSMPQSTPLLMKYDITTYVRLIETEKYYMLLDLANELDIWKKIIPSLCLQISENDSFLLDCLMSCSRNTSVNLLDLTNEQLNKWSQLKNAPVISERIQQFEHILISIVLILLGLYLNTTKVRLTDYHKVIFNNQAKLFSHVLRKIHTFITSNKPNSAVLTNAIQSITMLKFFIDKNYDFSYEFKNIQKGRVTDTSEEITYSNSNLYSNPDISYISTFNEYEIIYLNNSYQNLVHVDQSNSMSMGESQLYKDLLWYLMKVDFVINYPEAANNLVLDHNVVYQQITNASTDLSFSNNLNYLNPRSYANYFLKEFIIKVLSMGSNAIIEDANNRINTLFNFIDQSYMDPELKSQFHHCFTWTVRYIHPVSD.

Residues 19–46 (CVTCRDRHIKCDEQQPVCKNCQKSNRKC) constitute a DNA-binding region (zn(2)-C6 fungal-type). Disordered regions lie at residues 63 to 84 (DDNKPKELQQNEQPNSSHYAFP) and 230 to 250 (PQHHPMLDTSQHQETTSTDPN). A compositionally biased stretch (polar residues) spans 237 to 250 (DTSQHQETTSTDPN).

In terms of assembly, interacts with MCM1.

It localises to the nucleus. In terms of biological role, transcription factor that binds the promoters of genes involved in biofilm formation, which include several key adhesion genes, and recruits MCM1 to these sites. Plays an important role in hyphal growth and virulence. Promotes conversion of opaque cells to white phase, but needs existence of EFG1, a key regulator required for maintenance of the white state. The sequence is that of Adhesion and hyphal regulator 1 (AHR1) from Candida albicans (strain SC5314 / ATCC MYA-2876) (Yeast).